The sequence spans 493 residues: Glutamyl-tRNA(Gln) amidotransferase subunit A (493 aa).

Catalysis depends on charge relay system residues K79 and S159. Residue S183 is the Acyl-ester intermediate of the active site.

It belongs to the amidase family. GatA subfamily. As to quaternary structure, heterotrimer of A, B and C subunits.

It catalyses the reaction L-glutamyl-tRNA(Gln) + L-glutamine + ATP + H2O = L-glutaminyl-tRNA(Gln) + L-glutamate + ADP + phosphate + H(+). Functionally, allows the formation of correctly charged Gln-tRNA(Gln) through the transamidation of misacylated Glu-tRNA(Gln) in organisms which lack glutaminyl-tRNA synthetase. The reaction takes place in the presence of glutamine and ATP through an activated gamma-phospho-Glu-tRNA(Gln). The protein is Glutamyl-tRNA(Gln) amidotransferase subunit A of Rhizobium johnstonii (strain DSM 114642 / LMG 32736 / 3841) (Rhizobium leguminosarum bv. viciae).